The sequence spans 141 residues: Hemoglobin subunit alpha-A (141 aa).

Residues 1-141 (VLSPADKSNV…VGTVLTAKYR (141 aa)) form the Globin domain. Residue His58 participates in O2 binding. Residue His87 participates in heme b binding.

It belongs to the globin family. As to quaternary structure, heterotetramer of two alpha chains and two beta chains. Red blood cells.

In terms of biological role, involved in oxygen transport from the lung to the various peripheral tissues. This is Hemoglobin subunit alpha-A (HBAA) from Passer montanus (Eurasian tree sparrow).